A 214-amino-acid polypeptide reads, in one-letter code: UPF0111 protein MJ0629 (214 aa).

The protein belongs to the UPF0111 family.

The sequence is that of UPF0111 protein MJ0629 from Methanocaldococcus jannaschii (strain ATCC 43067 / DSM 2661 / JAL-1 / JCM 10045 / NBRC 100440) (Methanococcus jannaschii).